The primary structure comprises 343 residues: Ribosome production factor 1 (343 aa).

2 stretches are compositionally biased toward basic and acidic residues: residues 1–10 (MAEKKGPEAK) and 82–91 (EREALGDKAP). Disordered stretches follow at residues 1–51 (MAEK…LSEI) and 77–97 (KKRKKEREALGDKAPPKPVPK). The Brix domain occupies 136–319 (PKILITTSDR…LRSLQKGTFD (184 aa)). An RNA-binding region spans residues 297-314 (VGIQELGPRFTLKLRSLQ).

The protein resides in the nucleus. It localises to the nucleolus. Its function is as follows. May be required for ribosome biogenesis. The chain is Ribosome production factor 1 (rpf1) from Xenopus laevis (African clawed frog).